Consider the following 465-residue polypeptide: Asparagine--tRNA ligase (465 aa).

This sequence belongs to the class-II aminoacyl-tRNA synthetase family. Homodimer.

Its subcellular location is the cytoplasm. The catalysed reaction is tRNA(Asn) + L-asparagine + ATP = L-asparaginyl-tRNA(Asn) + AMP + diphosphate + H(+). This chain is Asparagine--tRNA ligase, found in Pseudoalteromonas translucida (strain TAC 125).